A 367-amino-acid chain; its full sequence is D-alanine--D-alanine ligase (367 aa).

Positions lysine 139–serine 340 constitute an ATP-grasp domain. Lysine 169–asparagine 224 is a binding site for ATP. Mg(2+)-binding residues include aspartate 298, glutamate 311, and asparagine 313.

The protein belongs to the D-alanine--D-alanine ligase family. Mg(2+) serves as cofactor. It depends on Mn(2+) as a cofactor.

It localises to the cytoplasm. The enzyme catalyses 2 D-alanine + ATP = D-alanyl-D-alanine + ADP + phosphate + H(+). It functions in the pathway cell wall biogenesis; peptidoglycan biosynthesis. In terms of biological role, cell wall formation. The sequence is that of D-alanine--D-alanine ligase from Thermosipho africanus (strain TCF52B).